Consider the following 1124-residue polypeptide: Angiopoietin-1 receptor (1124 aa).

The signal sequence occupies residues Met-1–Gly-22. The Extracellular portion of the chain corresponds to Ala-23–Leu-748. Cys-44 and Cys-102 form a disulfide bridge. An Ig-like C2-type 1 domain is found at Cys-44–Ser-123. Residues Asn-140 and Asn-158 are each glycosylated (N-linked (GlcNAc...) asparagine). EGF-like domains are found at residues Arg-210–Glu-252, Ala-254–Asn-299, and Ala-301–Glu-341. 13 disulfides stabilise this stretch: Cys-211–Cys-220, Cys-224–Cys-233, Cys-227–Cys-240, Cys-242–Cys-251, Cys-255–Cys-264, Cys-268–Cys-274, Cys-280–Cys-287, Cys-289–Cys-298, Cys-302–Cys-311, Cys-315–Cys-323, Cys-317–Cys-329, Cys-331–Cys-340, and Cys-370–Cys-424. The Ig-like C2-type 2 domain maps to Pro-350–Ser-440. N-linked (GlcNAc...) asparagine glycosylation is found at Asn-399, Asn-438, Asn-464, Asn-560, Asn-596, Asn-649, and Asn-691. 3 consecutive Fibronectin type-III domains span residues Pro-447–Ile-541, Pro-545–Asp-636, and Gln-641–Ser-735. A helical membrane pass occupies residues Ile-749–Ile-769. Over Leu-770–Ala-1124 the chain is Cytoplasmic. One can recognise a Protein kinase domain in the interval Ile-824 to Leu-1096. ATP contacts are provided by residues Ile-830–Val-838 and Lys-855. Tyr-860 carries the post-translational modification Phosphotyrosine; by autocatalysis. The active-site Proton acceptor is the Asp-964. Residues Tyr-992, Tyr-1102, and Tyr-1108 each carry the phosphotyrosine; by autocatalysis modification.

It belongs to the protein kinase superfamily. Tyr protein kinase family. Tie subfamily. In terms of assembly, homodimer. Heterodimer with TIE1. Interacts with ANGPT1, ANGPT2 and ANGPT4. At cell-cell contacts in quiescent cells, forms a signaling complex composed of ANGPT1 plus TEK molecules from two adjoining cells. In the absence of endothelial cell-cell contacts, interaction with ANGPT1 mediates contacts with the extracellular matrix. Interacts with PTPRB; this promotes endothelial cell-cell adhesion. Interacts with DOK2, GRB2, GRB7, GRB14, PIK3R1 and PTPN11/SHP2. Colocalizes with DOK2 at contacts with the extracellular matrix in migrating cells. Interacts (tyrosine phosphorylated) with TNIP2. Interacts (tyrosine phosphorylated) with SHC1 (via SH2 domain). Proteolytic processing leads to the shedding of the extracellular domain (soluble TIE-2 alias sTIE-2). Post-translationally, autophosphorylated on tyrosine residues in response to ligand binding. Autophosphorylation occurs in trans, i.e. one subunit of the dimeric receptor phosphorylates tyrosine residues on the other subunit. Autophosphorylation occurs in a sequential manner, where Tyr-992 in the kinase activation loop is phosphorylated first, followed by autophosphorylation at Tyr-1108 and at additional tyrosine residues. ANGPT1-induced phosphorylation is impaired during hypoxia, due to increased expression of ANGPT2. Phosphorylation is important for interaction with GRB14, PIK3R1 and PTPN11. Phosphorylation at Tyr-1102 is important for interaction with SHC1, GRB2 and GRB7. Phosphorylation at Tyr-1108 is important for interaction with DOK2 and for coupling to downstream signal transduction pathways in endothelial cells. Dephosphorylated by PTPRB. In terms of processing, ubiquitinated. The phosphorylated receptor is ubiquitinated and internalized, leading to its degradation. Detected in umbilical vein endothelial cells. Proteolytic processing gives rise to a soluble extracellular domain that is detected in blood plasma (at protein level). Predominantly expressed in endothelial cells and their progenitors, the angioblasts. Has been directly found in placenta and lung, with a lower level in umbilical vein endothelial cells, brain and kidney.

It is found in the cell membrane. The protein localises to the cell junction. Its subcellular location is the focal adhesion. It localises to the cytoplasm. The protein resides in the cytoskeleton. It is found in the secreted. The enzyme catalyses L-tyrosyl-[protein] + ATP = O-phospho-L-tyrosyl-[protein] + ADP + H(+). Angiopoietin binding leads to receptor dimerization and activation by autophosphorylation at Tyr-992 on the kinase activation loop. Inhibited by staurosporine, K252a, PP2, damnacanthal, SB203580, CEP-11207, CEP-11981 and CE-245677. Inhibited by triazine, thienopyrimidine and thiazolopyrimidine derivatives. Tyrosine-protein kinase that acts as a cell-surface receptor for ANGPT1, ANGPT2 and ANGPT4 and regulates angiogenesis, endothelial cell survival, proliferation, migration, adhesion and cell spreading, reorganization of the actin cytoskeleton, but also maintenance of vascular quiescence. Has anti-inflammatory effects by preventing the leakage of pro-inflammatory plasma proteins and leukocytes from blood vessels. Required for normal angiogenesis and heart development during embryogenesis. Required for post-natal hematopoiesis. After birth, activates or inhibits angiogenesis, depending on the context. Inhibits angiogenesis and promotes vascular stability in quiescent vessels, where endothelial cells have tight contacts. In quiescent vessels, ANGPT1 oligomers recruit TEK to cell-cell contacts, forming complexes with TEK molecules from adjoining cells, and this leads to preferential activation of phosphatidylinositol 3-kinase and the AKT1 signaling cascades. In migrating endothelial cells that lack cell-cell adhesions, ANGT1 recruits TEK to contacts with the extracellular matrix, leading to the formation of focal adhesion complexes, activation of PTK2/FAK and of the downstream kinases MAPK1/ERK2 and MAPK3/ERK1, and ultimately to the stimulation of sprouting angiogenesis. ANGPT1 signaling triggers receptor dimerization and autophosphorylation at specific tyrosine residues that then serve as binding sites for scaffold proteins and effectors. Signaling is modulated by ANGPT2 that has lower affinity for TEK, can promote TEK autophosphorylation in the absence of ANGPT1, but inhibits ANGPT1-mediated signaling by competing for the same binding site. Signaling is also modulated by formation of heterodimers with TIE1, and by proteolytic processing that gives rise to a soluble TEK extracellular domain. The soluble extracellular domain modulates signaling by functioning as decoy receptor for angiopoietins. TEK phosphorylates DOK2, GRB7, GRB14, PIK3R1; SHC1 and TIE1. The protein is Angiopoietin-1 receptor of Homo sapiens (Human).